The following is a 156-amino-acid chain: Small ribosomal subunit protein uS7 (156 aa).

This sequence belongs to the universal ribosomal protein uS7 family. In terms of assembly, part of the 30S ribosomal subunit. Contacts proteins S9 and S11.

One of the primary rRNA binding proteins, it binds directly to 16S rRNA where it nucleates assembly of the head domain of the 30S subunit. Is located at the subunit interface close to the decoding center, probably blocks exit of the E-site tRNA. The chain is Small ribosomal subunit protein uS7 from Limosilactobacillus reuteri (strain DSM 20016) (Lactobacillus reuteri).